A 199-amino-acid chain; its full sequence is MADTSKDIEELIGIMARLPGLGPRSARRAVLTLIKKRGALMRPLAETMARVAESARECVNCGNIGTGDLCEICMDVRRATGEICVVEDVADLWAMERGQAFKGRYHVLGGTLSALDDVGPEDLRIPKLRARMADEGITEVILALNATVDGQTTAHYIADELAPTGVTLSSLAQGVPIGGELDYLDDGTISAALRARKSL.

The C4-type zinc finger occupies 58 to 73 (CVNCGNIGTGDLCEIC). The Toprim domain maps to 81–176 (GEICVVEDVA…TLSSLAQGVP (96 aa)).

The protein belongs to the RecR family.

Its function is as follows. May play a role in DNA repair. It seems to be involved in an RecBC-independent recombinational process of DNA repair. It may act with RecF and RecO. This chain is Recombination protein RecR, found in Jannaschia sp. (strain CCS1).